The sequence spans 261 residues: TM2 domain-containing protein 3 (261 aa).

The signal sequence occupies residues 1–44; it reads MEAAAEPLRSVRHLSRVLLFLSQCYILSGDGSLNLEHSQPLAQA. Residues 45–193 lie on the Extracellular side of the membrane; the sequence is IKDPGPTRTF…RTFPKLLYCN (149 aa). N-linked (GlcNAc...) asparagine glycosylation is found at N101, N136, N154, N171, N183, and N193. A helical membrane pass occupies residues 194–214; sequence WTGGYKWSTALALSITLGGFG. Residues 197 to 244 enclose the TM2 domain; it reads GYKWSTALALSITLGGFGADRFYLGQWREGLGKLFSFGGLGIWTLIDV. Residues 215–229 are Cytoplasmic-facing; the sequence is ADRFYLGQWREGLGK. The helical transmembrane segment at 230 to 250 threads the bilayer; that stretch reads LFSFGGLGIWTLIDVLLIGVG. Residues 251-261 are Extracellular-facing; sequence YVGPADGSLYI.

Belongs to the TM2 family.

It is found in the membrane. This chain is TM2 domain-containing protein 3 (Tm2d3), found in Mus musculus (Mouse).